A 665-amino-acid polypeptide reads, in one-letter code: Cyclic nucleotide-gated cation channel subunit A (665 aa).

At 1–110 (MRHFKVKAMV…DPTLQSHYRW (110 aa)) the chain is on the cytoplasmic side. Residues 111-131 (LAIVSLAVLYNIIFVVGRAVF) form a helical membrane-spanning segment. Residues 132-138 (WEINKSA) are Extracellular-facing. N135 carries an N-linked (GlcNAc...) asparagine glycan. A helical transmembrane segment spans residues 139 to 159 (PAFWYTLDYLCDFIYLLDTLV). The Cytoplasmic portion of the chain corresponds to 160-186 (HMHEGFLDQGLLVRDAFRLRRHYFHTK). A helical membrane pass occupies residues 187–207 (GWYLDVLSMLPTDLAYIWWPP). Over 208-253 (ETCSSLYLPCPVIVRLNRLLRINRLWEWFDRTETATGYPNAFRICK) the chain is Extracellular. The helical transmembrane segment at 254–274 (VVLAILVLIHWNACMYFAISY) threads the bilayer. Over 275-325 (EIGFSSDSWVYNLNGTRNNTLQRQYIYSFYWSTLTLTTIGETPTPENDVEY) the chain is Cytoplasmic. Residues 326–346 (LFVVADFLAGVLIFATIVGNI) form a helical membrane-spanning segment. Over 347–481 (GSMISNMNVA…GKLSVVGDDG (135 aa)) the chain is Extracellular. Residues 437-559 (LLEA…DGLL), E496, and R511 contribute to the 3',5'-cyclic GMP site. A helical membrane pass occupies residues 482–502 (ITVLATLGAGSVFGEVSVLEI). Over 503 to 665 (AGNRTGNRRT…SSDAAKQNTL (163 aa)) the chain is Cytoplasmic. A disordered region spans residues 633-665 (RSGRLYSLQPKRRPRSRPDATAKSSDAAKQNTL). A compositionally biased stretch (polar residues) spans 654-665 (AKSSDAAKQNTL).

This sequence belongs to the cyclic nucleotide-gated cation channel (TC 1.A.1.5) family. Expressed in antennae and the visual system.

It is found in the membrane. In terms of biological role, approximately 50-fold more sensitive to cGMP than to cAMP. May be involved in transduction cascades of both invertebrate photoreceptors and olfactory sensillae. The sequence is that of Cyclic nucleotide-gated cation channel subunit A (CngA) from Drosophila melanogaster (Fruit fly).